The chain runs to 505 residues: Argininosuccinate lyase (505 aa).

It belongs to the lyase 1 family. Argininosuccinate lyase subfamily.

Its subcellular location is the cytoplasm. It catalyses the reaction 2-(N(omega)-L-arginino)succinate = fumarate + L-arginine. Its pathway is amino-acid biosynthesis; L-arginine biosynthesis; L-arginine from L-ornithine and carbamoyl phosphate: step 3/3. This is Argininosuccinate lyase from Rhodococcoides fascians (Rhodococcus fascians).